A 264-amino-acid chain; its full sequence is ATP synthase subunit a (264 aa).

The next 6 helical transmembrane spans lie at 29-49, 90-110, 134-154, 177-197, 208-228, and 235-255; these read TWHI…LWIF, IAPL…MDMI, DVNI…FYSI, IPVN…SLAL, LIFI…TLGV, and LIFH…LTIV.

The protein belongs to the ATPase A chain family. As to quaternary structure, F-type ATPases have 2 components, CF(1) - the catalytic core - and CF(0) - the membrane proton channel. CF(1) has five subunits: alpha(3), beta(3), gamma(1), delta(1), epsilon(1). CF(0) has three main subunits: a(1), b(2) and c(9-12). The alpha and beta chains form an alternating ring which encloses part of the gamma chain. CF(1) is attached to CF(0) by a central stalk formed by the gamma and epsilon chains, while a peripheral stalk is formed by the delta and b chains.

Its subcellular location is the cell inner membrane. Functionally, key component of the proton channel; it plays a direct role in the translocation of protons across the membrane. The polypeptide is ATP synthase subunit a (Shewanella baltica (strain OS223)).